Consider the following 305-residue polypeptide: UDP-3-O-acyl-N-acetylglucosamine deacetylase (305 aa).

His-79, His-238, and Asp-242 together coordinate Zn(2+). Catalysis depends on His-265, which acts as the Proton donor.

Belongs to the LpxC family. Requires Zn(2+) as cofactor.

It catalyses the reaction a UDP-3-O-[(3R)-3-hydroxyacyl]-N-acetyl-alpha-D-glucosamine + H2O = a UDP-3-O-[(3R)-3-hydroxyacyl]-alpha-D-glucosamine + acetate. The protein operates within glycolipid biosynthesis; lipid IV(A) biosynthesis; lipid IV(A) from (3R)-3-hydroxytetradecanoyl-[acyl-carrier-protein] and UDP-N-acetyl-alpha-D-glucosamine: step 2/6. Catalyzes the hydrolysis of UDP-3-O-myristoyl-N-acetylglucosamine to form UDP-3-O-myristoylglucosamine and acetate, the committed step in lipid A biosynthesis. This chain is UDP-3-O-acyl-N-acetylglucosamine deacetylase, found in Salmonella agona (strain SL483).